The sequence spans 122 residues: Basic phospholipase A2 Ts-G6D49 (122 aa).

Disulfide bonds link Cys26/Cys115, Cys28/Cys44, Cys43/Cys95, Cys49/Cys122, Cys50/Cys88, Cys57/Cys81, and Cys75/Cys86. The Ca(2+) site is built by Tyr27, Gly29, and Gly31. Residue His47 is part of the active site. Asp48 lines the Ca(2+) pocket. Asp89 is a catalytic residue.

The cofactor is Ca(2+). In terms of tissue distribution, expressed by the venom gland.

Its subcellular location is the secreted. It catalyses the reaction a 1,2-diacyl-sn-glycero-3-phosphocholine + H2O = a 1-acyl-sn-glycero-3-phosphocholine + a fatty acid + H(+). In terms of biological role, snake venom phospholipase A2 that induces fast and sustaining local edema a few hours after injection (5-10 ug) in the hind paw, and prolongs the coagulation time of human plasma. Exhibits moderate hydrolytic activities and prefers the zwitterionic micelles (dPPC with Triton X-100) to the anionic micelles (dPPC with deoxycholate). PLA2 catalyzes the calcium-dependent hydrolysis of the 2-acyl groups in 3-sn-phosphoglycerides. This chain is Basic phospholipase A2 Ts-G6D49, found in Trimeresurus stejnegeri (Chinese green tree viper).